Reading from the N-terminus, the 415-residue chain is MTKCNLPEVVVTGVGVTASIGQGKEDFASSLLSGRHAFDVMKRSGRQKDSRFIGAEIASLSYPDRLSKKMLRKASFSSRAALVTLTEAWEEAELDDADSSRIGLVVGGSNFQQRENFEVYERYQDRSGFISPAYGLSFMDSDLCGICTDQFGITGLAYTVGGASASGQLAVIHAIQQVLSGEVDTCIALGALMDLSYMECEALRALGAMGTDKYADEPENACRPFDQNRDGFIYGESCGALVIERKETALRRGLKPYAALSGWSIKLDGNRNPDPSLEGEIHVIQKALERARLLPEDIDYINPHGTGSFIGDEIELKALRACRLSHAYINATKSITGHGLSAAGIVEIISVLLQMKKSALHPSRNLDHPIDDSFHWVNEKSISYRIKNALSLSMGFGGMNTAVCIQNIEKCGGES.

A Ketosynthase family 3 (KS3) domain is found at 6 to 407; it reads LPEVVVTGVG…GMNTAVCIQN (402 aa).

Belongs to the thiolase-like superfamily. Beta-ketoacyl-ACP synthases family.

It is found in the cytoplasm. The enzyme catalyses malonyl-[ACP] + H(+) = acetyl-[ACP] + CO2. Its pathway is antibiotic biosynthesis; bacillaene biosynthesis. Functionally, involved in some intermediate steps for the synthesis of the antibiotic polyketide bacillaene which is involved in secondary metabolism. It decarboxylates selectively the malonyl group attached on the acyl-carrier-protein AcpK (Mal-AcpK). The sequence is that of Polyketide biosynthesis malonyl-ACP decarboxylase PksF (pksF) from Bacillus subtilis (strain 168).